The sequence spans 436 residues: UPF0597 protein YhaM (436 aa).

This sequence belongs to the UPF0597 family.

The sequence is that of UPF0597 protein YhaM from Salmonella dublin (strain CT_02021853).